Consider the following 92-residue polypeptide: MARSSKKNPFVANHLLSKIEKLNKAEERSIIVTWSRASTIIFAMVGHTIAVHNGKEHLPIYITERMVGHKLGEFAPTLTFRGHARNDNRSRR.

This sequence belongs to the universal ribosomal protein uS19 family.

The protein resides in the plastid. It is found in the chloroplast. Functionally, protein S19 forms a complex with S13 that binds strongly to the 16S ribosomal RNA. In Nymphaea alba (White water-lily), this protein is Small ribosomal subunit protein uS19c.